Here is an 84-residue protein sequence, read N- to C-terminus: MSTKLFSYFMLLVVLFSVLTIIPKTEAQKRCRQELEPGKQCVLAKCRELCFKQLKGFGSCIEKPPGSSKYTCNCFYNCGPPGFF.

The first 27 residues, 1–27 (MSTKLFSYFMLLVVLFSVLTIIPKTEA), serve as a signal peptide directing secretion. Disulfide bonds link cysteine 31/cysteine 78, cysteine 41/cysteine 60, cysteine 46/cysteine 72, and cysteine 50/cysteine 74.

The protein belongs to the DEFL family.

It localises to the secreted. The protein is Putative defensin-like protein 165 (LCR12) of Arabidopsis thaliana (Mouse-ear cress).